Consider the following 464-residue polypeptide: Fumarate hydratase class II (464 aa).

Residues 97-99, 128-131, 138-140, and T186 contribute to the substrate site; these read SGT, HPND, and SSN. The active-site Proton donor/acceptor is H187. S317 is a catalytic residue. Substrate-binding positions include S318 and 323–325; that span reads KVN.

Belongs to the class-II fumarase/aspartase family. Fumarase subfamily. Homotetramer.

Its subcellular location is the cytoplasm. The enzyme catalyses (S)-malate = fumarate + H2O. It participates in carbohydrate metabolism; tricarboxylic acid cycle; (S)-malate from fumarate: step 1/1. In terms of biological role, involved in the TCA cycle. Catalyzes the stereospecific interconversion of fumarate to L-malate. The sequence is that of Fumarate hydratase class II from Leptospira interrogans serogroup Icterohaemorrhagiae serovar copenhageni (strain Fiocruz L1-130).